The following is a 947-amino-acid chain: Bifunctional glutamine synthetase adenylyltransferase/adenylyl-removing enzyme (947 aa).

Residues 1–440 (MTPLSSPLRQ…VFNELIGDDE (440 aa)) are adenylyl removase. Residues 450–947 (SEPWREVWQD…ASWRKWLVAV (498 aa)) are adenylyl transferase.

This sequence belongs to the GlnE family. The cofactor is Mg(2+).

The enzyme catalyses [glutamine synthetase]-O(4)-(5'-adenylyl)-L-tyrosine + phosphate = [glutamine synthetase]-L-tyrosine + ADP. It carries out the reaction [glutamine synthetase]-L-tyrosine + ATP = [glutamine synthetase]-O(4)-(5'-adenylyl)-L-tyrosine + diphosphate. Its function is as follows. Involved in the regulation of glutamine synthetase GlnA, a key enzyme in the process to assimilate ammonia. When cellular nitrogen levels are high, the C-terminal adenylyl transferase (AT) inactivates GlnA by covalent transfer of an adenylyl group from ATP to specific tyrosine residue of GlnA, thus reducing its activity. Conversely, when nitrogen levels are low, the N-terminal adenylyl removase (AR) activates GlnA by removing the adenylyl group by phosphorolysis, increasing its activity. The regulatory region of GlnE binds the signal transduction protein PII (GlnB) which indicates the nitrogen status of the cell. The polypeptide is Bifunctional glutamine synthetase adenylyltransferase/adenylyl-removing enzyme (Salmonella arizonae (strain ATCC BAA-731 / CDC346-86 / RSK2980)).